A 538-amino-acid polypeptide reads, in one-letter code: MAAQLHHALYELLHEAAAAQRALLLAIPFSLLLLPLLLRYLAASASASATKNDGAAPASDPDKLLSLLPSPPMKLPIIGHLHLMGDIPYVSLAALATRYGPDLMLLRLGAVPTVVVSSPRVAEAVLRTYDHVFSSRPRSLVSDIIMYGATDSCFAPYGDHFRKARKLVTVHLLNASKVRSQRPAREEEVRGALDRVRRAAAAREPVDMSELLHSFVNNLVCRAVSGKFSMEEGRNRLFRELTDINAGLLGGFHIQDYFPRLGRIELVRKVACAKTRRVRKRWDDLLDKLIDDHAARMATHQDEDDDKDFIYVLLSLQKEYGLTRDHIKAILIDMFEAGTDTSYMTLEFAMTELIRKPHLMKKLQEEVRRNVPAGQEMVTEDNLPGMTDLKAVIKETLRLHPPVPLLLPHYSLDACEVAGYTIPANTRVVVNAWALGRHSGYWERENEFVPERFLSGDVAGGVDLKPNEFQFLAFGSGRRMCPGVHSASATIEAMLSNLMYRFDWQLPAGMKAEDVDMTEVFGITVSRKEKLLLVPQAA.

A helical transmembrane segment spans residues 22–42; that stretch reads ALLLAIPFSLLLLPLLLRYLA. Cys-481 provides a ligand contact to heme.

The protein belongs to the cytochrome P450 family. Heme is required as a cofactor.

Its subcellular location is the membrane. The catalysed reaction is indole + reduced [NADPH--hemoprotein reductase] + O2 = indolin-2-one + oxidized [NADPH--hemoprotein reductase] + H2O + H(+). It functions in the pathway secondary metabolite biosynthesis; 2,4-dihydroxy-1,4-benzoxazin-3-one biosynthesis; 2,4-dihydroxy-1,4-benzoxazin-3-one from indoleglycerol phosphate: step 2/5. In terms of biological role, catalyzes the conversion of indole to indolin-2-one. The chain is indole-2-monooxygenase (CYP71C4) from Zea mays (Maize).